Here is a 360-residue protein sequence, read N- to C-terminus: Putative F-box protein At5g55150 (360 aa).

In terms of domain architecture, F-box spans 6 to 54; that stretch reads SSWSEFLPELLNTVFHNLNDARDILNCATVCSSWKDSSSAVYYSRTFSP.

This Arabidopsis thaliana (Mouse-ear cress) protein is Putative F-box protein At5g55150.